The primary structure comprises 192 residues: Large ribosomal subunit protein uL5 (192 aa).

The protein belongs to the universal ribosomal protein uL5 family. As to quaternary structure, part of the 50S ribosomal subunit; part of the 5S rRNA/L5/L18/L25 subcomplex. Contacts the 5S rRNA and the P site tRNA. Forms a bridge to the 30S subunit in the 70S ribosome.

In terms of biological role, this is one of the proteins that bind and probably mediate the attachment of the 5S RNA into the large ribosomal subunit, where it forms part of the central protuberance. In the 70S ribosome it contacts protein S13 of the 30S subunit (bridge B1b), connecting the 2 subunits; this bridge is implicated in subunit movement. Contacts the P site tRNA; the 5S rRNA and some of its associated proteins might help stabilize positioning of ribosome-bound tRNAs. In Mesorhizobium japonicum (strain LMG 29417 / CECT 9101 / MAFF 303099) (Mesorhizobium loti (strain MAFF 303099)), this protein is Large ribosomal subunit protein uL5.